The chain runs to 76 residues: Small nuclear ribonucleoprotein G (76 aa).

Positions 4–76 (AHPPELKKFM…IIMLEALERV (73 aa)) constitute a Sm domain.

Belongs to the snRNP Sm proteins family. As to quaternary structure, core component of the spliceosomal U1, U2, U4 and U5 small nuclear ribonucleoproteins (snRNPs), the building blocks of the spliceosome. Most spliceosomal snRNPs contain a common set of Sm proteins, SNRPB, SNRPD1, SNRPD2, SNRPD3, SNRPE, SNRPF and SNRPG that assemble in a heptameric protein ring on the Sm site of the small nuclear RNA to form the core snRNP. Component of the U1 snRNP. The U1 snRNP is composed of the U1 snRNA and the 7 core Sm proteins SNRPB, SNRPD1, SNRPD2, SNRPD3, SNRPE, SNRPF and SNRPG, and at least three U1 snRNP-specific proteins SNRNP70/U1-70K, SNRPA/U1-A and SNRPC/U1-C. Component of the U4/U6-U5 tri-snRNP complex composed of the U4, U6 and U5 snRNAs and at least PRPF3, PRPF4, PRPF6, PRPF8, PRPF31, SNRNP200, TXNL4A, SNRNP40, SNRPB, SNRPD1, SNRPD2, SNRPD3, SNRPE, SNRPF, SNRPG, DDX23, CD2BP2, PPIH, SNU13, EFTUD2, SART1 and USP39, plus LSM2, LSM3, LSM4, LSM5, LSM6, LSM7 and LSM8. Component of the U7 snRNP complex, or U7 Sm protein core complex, that is composed of the U7 snRNA and at least LSM10, LSM11, SNRPB, SNRPD3, SNRPE, SNRPF and SNRPG; the complex does not contain SNRPD1 and SNRPD2. Component of the minor spliceosome, which splices U12-type introns. Part of the SMN-Sm complex that contains SMN1, GEMIN2/SIP1, DDX20/GEMIN3, GEMIN4, GEMIN5, GEMIN6, GEMIN7, GEMIN8, STRAP/UNRIP and the Sm proteins SNRPB, SNRPD1, SNRPD2, SNRPD3, SNRPE, SNRPF and SNRPG; catalyzes core snRNPs assembly. Forms a 6S pICln-Sm complex composed of CLNS1A/pICln, SNRPD1, SNRPD2, SNRPE, SNRPF and SNRPG; ring-like structure where CLNS1A/pICln mimics additional Sm proteins and which is unable to assemble into the core snRNP. Interacts with GEMIN2 (via N-terminus); the interaction is direct. Interacts with SNRPE; the interaction is direct.

The protein resides in the cytoplasm. Its subcellular location is the cytosol. It localises to the nucleus. Its function is as follows. Plays a role in pre-mRNA splicing as a core component of the spliceosomal U1, U2, U4 and U5 small nuclear ribonucleoproteins (snRNPs), the building blocks of the spliceosome. Component of both the pre-catalytic spliceosome B complex and activated spliceosome C complexes. As a component of the minor spliceosome, involved in the splicing of U12-type introns in pre-mRNAs. As part of the U7 snRNP it is involved in histone 3'-end processing. In Bos taurus (Bovine), this protein is Small nuclear ribonucleoprotein G (SNRPG).